Consider the following 159-residue polypeptide: 17 kDa surface antigen (159 aa).

Residues 1–19 (MKLLSKIMIIALATSMLQA) form the signal peptide. Cys20 carries N-palmitoyl cysteine lipidation. Cys20 carries S-diacylglycerol cysteine lipidation.

The protein belongs to the rickettsiale 17 kDa surface antigen family.

The protein resides in the cell outer membrane. The protein is 17 kDa surface antigen (omp) of Rickettsia japonica (strain ATCC VR-1363 / YH).